A 76-amino-acid chain; its full sequence is Conotoxin VnMKLT2-013 (76 aa).

The signal sequence occupies residues 1–23 (MMKLTCVLIIAVLFLTACQLTTA). The propeptide occupies 24-42 (ETRDEYRAVRSSDEVQNSR). The disordered stretch occupies residues 29-49 (YRAVRSSDEVQNSRSTDDCST). Cystine bridges form between Cys-47-Cys-58, Cys-52-Cys-63, and Cys-57-Cys-72.

Belongs to the conotoxin O1 superfamily. In terms of tissue distribution, expressed by the venom duct.

The protein resides in the secreted. The chain is Conotoxin VnMKLT2-013 from Conus ventricosus (Mediterranean cone).